The primary structure comprises 84 residues: Sec-independent protein translocase protein TatA (84 aa).

Residues Met-1–Gly-21 traverse the membrane as a helical segment. The segment at Lys-40–Ala-84 is disordered. Composition is skewed to basic and acidic residues over residues Ala-42–Lys-66 and Ala-75–Ala-84.

It belongs to the TatA/E family. As to quaternary structure, the Tat system comprises two distinct complexes: a TatABC complex, containing multiple copies of TatA, TatB and TatC subunits, and a separate TatA complex, containing only TatA subunits. Substrates initially bind to the TatABC complex, which probably triggers association of the separate TatA complex to form the active translocon.

The protein resides in the cell inner membrane. In terms of biological role, part of the twin-arginine translocation (Tat) system that transports large folded proteins containing a characteristic twin-arginine motif in their signal peptide across membranes. TatA could form the protein-conducting channel of the Tat system. This is Sec-independent protein translocase protein TatA from Vibrio atlanticus (strain LGP32) (Vibrio splendidus (strain Mel32)).